The sequence spans 282 residues: Bifunctional protein FolD (282 aa).

NADP(+) contacts are provided by residues 165–167 (GAS) and Ile231.

Belongs to the tetrahydrofolate dehydrogenase/cyclohydrolase family. Homodimer.

It catalyses the reaction (6R)-5,10-methylene-5,6,7,8-tetrahydrofolate + NADP(+) = (6R)-5,10-methenyltetrahydrofolate + NADPH. The catalysed reaction is (6R)-5,10-methenyltetrahydrofolate + H2O = (6R)-10-formyltetrahydrofolate + H(+). The protein operates within one-carbon metabolism; tetrahydrofolate interconversion. Catalyzes the oxidation of 5,10-methylenetetrahydrofolate to 5,10-methenyltetrahydrofolate and then the hydrolysis of 5,10-methenyltetrahydrofolate to 10-formyltetrahydrofolate. This Francisella tularensis subsp. novicida (strain U112) protein is Bifunctional protein FolD.